A 414-amino-acid chain; its full sequence is DNA primase large subunit PriL (414 aa).

4 residues coordinate [4Fe-4S] cluster: C251, C352, C370, and C376.

It belongs to the eukaryotic-type primase large subunit family. As to quaternary structure, heterodimer of a small subunit (PriS) and a large subunit (PriL). Requires [4Fe-4S] cluster as cofactor.

Regulatory subunit of DNA primase, an RNA polymerase that catalyzes the synthesis of short RNA molecules used as primers for DNA polymerase during DNA replication. Stabilizes and modulates the activity of the small subunit, increasing the rate of DNA synthesis, and conferring RNA synthesis capability. The DNA polymerase activity may enable DNA primase to also catalyze primer extension after primer synthesis. May also play a role in DNA repair. The sequence is that of DNA primase large subunit PriL from Methanocaldococcus jannaschii (strain ATCC 43067 / DSM 2661 / JAL-1 / JCM 10045 / NBRC 100440) (Methanococcus jannaschii).